The primary structure comprises 669 residues: DNA ligase (669 aa).

Residues 34 to 38 (DAEYD), 83 to 84 (SL), and Glu-114 each bind NAD(+). Lys-116 functions as the N6-AMP-lysine intermediate in the catalytic mechanism. The NAD(+) site is built by Arg-137, Glu-171, Lys-287, and Lys-311. Zn(2+)-binding residues include Cys-405, Cys-408, Cys-423, and Cys-428. The 79-residue stretch at 591–669 (NVESYFAGKT…EERFLQELNK (79 aa)) folds into the BRCT domain.

The protein belongs to the NAD-dependent DNA ligase family. LigA subfamily. Mg(2+) serves as cofactor. It depends on Mn(2+) as a cofactor.

It carries out the reaction NAD(+) + (deoxyribonucleotide)n-3'-hydroxyl + 5'-phospho-(deoxyribonucleotide)m = (deoxyribonucleotide)n+m + AMP + beta-nicotinamide D-nucleotide.. Functionally, DNA ligase that catalyzes the formation of phosphodiester linkages between 5'-phosphoryl and 3'-hydroxyl groups in double-stranded DNA using NAD as a coenzyme and as the energy source for the reaction. It is essential for DNA replication and repair of damaged DNA. This is DNA ligase from Bacillus cereus (strain 03BB102).